A 397-amino-acid chain; its full sequence is Argininosuccinate synthase (397 aa).

7–15 (AFSGGLDTT) provides a ligand contact to ATP. Y84 provides a ligand contact to L-citrulline. Residue G114 participates in ATP binding. L-aspartate-binding residues include T116, N120, and D121. N120 is an L-citrulline binding site. L-citrulline contacts are provided by R124, S170, S179, E254, and Y266.

The protein belongs to the argininosuccinate synthase family. Type 1 subfamily. In terms of assembly, homotetramer.

It localises to the cytoplasm. The enzyme catalyses L-citrulline + L-aspartate + ATP = 2-(N(omega)-L-arginino)succinate + AMP + diphosphate + H(+). It participates in amino-acid biosynthesis; L-arginine biosynthesis; L-arginine from L-ornithine and carbamoyl phosphate: step 2/3. The chain is Argininosuccinate synthase from Haloquadratum walsbyi (strain DSM 16790 / HBSQ001).